The primary structure comprises 549 residues: Putative lipase ATG15 (549 aa).

Over 1 to 19 (MKQDLYKESSPPPSTTKSK) the chain is Cytoplasmic. Residues 20–42 (GLYVIVAALVTTAIYLLYSQGYS) form a helical; Signal-anchor for type II membrane protein membrane-spanning segment. Residues 43 to 549 (NTHGEKDMPS…SHTVTHVTMA (507 aa)) lie on the Lumenal side of the membrane. N-linked (GlcNAc...) asparagine glycans are attached at residues N204 and N315. S331 (charge relay system) is an active-site residue. N448 is a glycosylation site (N-linked (GlcNAc...) asparagine). Residues 474-510 (DDDDKDKKKKKKTSTSSSVVSKTKTSTSSTVATNTMP) form a disordered region. Over residues 487–504 (STSSSVVSKTKTSTSSTV) the composition is skewed to low complexity.

The protein belongs to the AB hydrolase superfamily. Lipase family. Binds to both phosphatidylinositol (PI) and phosphatidylinositol 3,5-bisphosphate (PIP2).

Its subcellular location is the endosome. It localises to the multivesicular body membrane. It is found in the prevacuolar compartment membrane. The enzyme catalyses a triacylglycerol + H2O = a diacylglycerol + a fatty acid + H(+). Lipase which is essential for lysis of subvacuolar cytoplasm to vacuole targeted bodies and intravacuolar autophagic bodies. Involved in the lysis of intravacuolar multivesicular body (MVB) vesicles. The intravacuolar membrane disintegration by ATG15 is critical to life span extension. This is Putative lipase ATG15 (ATG15) from Yarrowia lipolytica (strain CLIB 122 / E 150) (Yeast).